Consider the following 253-residue polypeptide: Isoprenyl transferase (253 aa).

Aspartate 30 is a catalytic residue. Aspartate 30 serves as a coordination point for Mg(2+). Substrate is bound by residues 31 to 34 (GNRR), tryptophan 35, histidine 51, and 79 to 81 (STE). Asparagine 82 (proton acceptor) is an active-site residue. Substrate-binding positions include phenylalanine 83, arginine 85, arginine 202, and 208 to 210 (RVS). Residue glutamate 221 participates in Mg(2+) binding.

It belongs to the UPP synthase family. Homodimer. It depends on Mg(2+) as a cofactor.

Catalyzes the condensation of isopentenyl diphosphate (IPP) with allylic pyrophosphates generating different type of terpenoids. The polypeptide is Isoprenyl transferase (Chlamydia muridarum (strain MoPn / Nigg)).